Reading from the N-terminus, the 495-residue chain is ATP synthase subunit beta, chloroplastic (495 aa).

172–179 (GGAGVGKT) provides a ligand contact to ATP.

It belongs to the ATPase alpha/beta chains family. As to quaternary structure, F-type ATPases have 2 components, CF(1) - the catalytic core - and CF(0) - the membrane proton channel. CF(1) has five subunits: alpha(3), beta(3), gamma(1), delta(1), epsilon(1). CF(0) has four main subunits: a(1), b(1), b'(1) and c(9-12).

It localises to the plastid. The protein localises to the chloroplast thylakoid membrane. The catalysed reaction is ATP + H2O + 4 H(+)(in) = ADP + phosphate + 5 H(+)(out). Functionally, produces ATP from ADP in the presence of a proton gradient across the membrane. The catalytic sites are hosted primarily by the beta subunits. The sequence is that of ATP synthase subunit beta, chloroplastic from Eucomis bicolor (King's flower).